Here is a 121-residue protein sequence, read N- to C-terminus: Large ribosomal subunit protein bL12 (121 aa).

This sequence belongs to the bacterial ribosomal protein bL12 family. In terms of assembly, homodimer. Part of the ribosomal stalk of the 50S ribosomal subunit. Forms a multimeric L10(L12)X complex, where L10 forms an elongated spine to which 2 to 4 L12 dimers bind in a sequential fashion. Binds GTP-bound translation factors.

Functionally, forms part of the ribosomal stalk which helps the ribosome interact with GTP-bound translation factors. Is thus essential for accurate translation. This Aeromonas hydrophila subsp. hydrophila (strain ATCC 7966 / DSM 30187 / BCRC 13018 / CCUG 14551 / JCM 1027 / KCTC 2358 / NCIMB 9240 / NCTC 8049) protein is Large ribosomal subunit protein bL12.